Here is a 458-residue protein sequence, read N- to C-terminus: Probable M18 family aminopeptidase 1 (458 aa).

Zn(2+)-binding residues include histidine 95, histidine 170, and histidine 434.

Belongs to the peptidase M18 family. Zn(2+) serves as cofactor.

The sequence is that of Probable M18 family aminopeptidase 1 from Borreliella afzelii (strain PKo) (Borrelia afzelii).